The sequence spans 685 residues: Putative protein FAR1-RELATED SEQUENCE 10 (685 aa).

Residues 69–161 (EYYSTFARKS…SNVHNHELLE (93 aa)) form the FAR1 domain. The MULE domain occupies 292 to 388 (VVVFDTSYRS…FMSHIVSKLA (97 aa)). An SWIM-type zinc finger spans residues 565–603 (GECCVIWNPENEEIQCSCKEFEHSGILCRHTLRVLTVKN).

The protein belongs to the FHY3/FAR1 family.

This chain is Putative protein FAR1-RELATED SEQUENCE 10 (FRS10), found in Arabidopsis thaliana (Mouse-ear cress).